A 397-amino-acid polypeptide reads, in one-letter code: Lysophospholipid transporter LplT (397 aa).

The Periplasmic portion of the chain corresponds to 1 to 17 (MSESVHTNTSLWSKGMK). Residues 18-38 (AVIVAQFLSAFGDNALLFATL) form a helical membrane-spanning segment. The Cytoplasmic portion of the chain corresponds to 39 to 52 (ALLKAQFYPEWSQP). The chain crosses the membrane as a helical span at residues 53–73 (ILQMVFVGAYILFAPFVGQVA). The Periplasmic segment spans residues 74 to 90 (DSFAKGRVMMFANGLKL). Residues 91–111 (LGAASICFGINPFLGYTLVGV) form a helical membrane-spanning segment. Over 112–144 (GAAAYSPAKYGILGELTTGSKLVKANGLMEAST) the chain is Cytoplasmic. A helical membrane pass occupies residues 145–165 (IAAILLGSVAGGVLADWHVLV). A topological domain (periplasmic) is located at residue Ala166. A helical transmembrane segment spans residues 167–187 (LAACALAYGGAVVANIYIPKL). Residues 188–226 (AAARPGQSWNLINMTRSFLNACTSLWRNGETRFSLVGTS) lie on the Cytoplasmic side of the membrane. The helical transmembrane segment at 227-247 (LFWGAGVTLRFLLVLWVPVAL) threads the bilayer. The Periplasmic segment spans residues 248 to 256 (GITDNATPT). The chain crosses the membrane as a helical span at residues 257-277 (YLNAMVAIGIVVGAGAAAKLV). Over 278–280 (TLE) the chain is Cytoplasmic. Residues 281–301 (TVSRCMPAGILIGVVVLIFSL) form a helical membrane-spanning segment. Topologically, residues 302 to 304 (QHE) are periplasmic. The helical transmembrane segment at 305-325 (LLPAYALLMLIGVMGGFFVVP) threads the bilayer. The Cytoplasmic segment spans residues 326 to 343 (LNALLQERGKKSVGAGNA). The helical transmembrane segment at 344-364 (IAVQNLGENSAMLLMLGIYSL) threads the bilayer. The Periplasmic segment spans residues 365-366 (AV). Residues 367–387 (MIGIPVVPIGIGFGALFALAI) traverse the membrane as a helical segment. Topologically, residues 388–397 (TALWIWQRRH) are cytoplasmic.

The protein belongs to the major facilitator superfamily. LplT (TC 2.A.1.42) family.

The protein localises to the cell inner membrane. Functionally, catalyzes the facilitated diffusion of 2-acyl-glycero-3-phosphoethanolamine (2-acyl-GPE) into the cell. The sequence is that of Lysophospholipid transporter LplT from Escherichia coli O8 (strain IAI1).